The primary structure comprises 447 residues: MREIVHLQTGQCGNQIGAAFWQTISGEHGLDGSGVYNGTSDLQLERMNVYFNEASGNKFVPRAVLVDLEPGTMDAVRAGPFGQLFRPDNFVFGQSGAGNNWAKGHYTEGAELVDQVLDVVRREAEGCDCLQGFQITHSLGGGTGAGMGTLLISKIREEFPDRMMATFSVVPSPKVSDTVVEPYNATLSIHQLVENSDETFCIDNEALYDICMRTLKLNNPSYGDLNHLVSAVMSGVTTCLRFPGQLNSDLRKLAVNMVPFPRLHFFMVGFAPLTSRGAHSFRAVTVPELTQQMFDPKNMMAASDFRNGRYLTCSAYFRGKVSMKEVEDQMRNVQNKNSSYFVEWIPNNVQTALCSVPPRGLKMSATFVGNSTSIQELFKRIGDQFTAMFRRKAFLHWYTGEGMDEMEFTEAESNMNDLVSEYQQYQEASISEGEEEYDEEAPLEAEE.

Q11, E69, S138, G142, T143, G144, N204, and N226 together coordinate GTP. E69 is a Mg(2+) binding site. A disordered region spans residues 425–447; it reads YQEASISEGEEEYDEEAPLEAEE. Residues 432–447 are compositionally biased toward acidic residues; it reads EGEEEYDEEAPLEAEE.

It belongs to the tubulin family. Dimer of alpha and beta chains. A typical microtubule is a hollow water-filled tube with an outer diameter of 25 nm and an inner diameter of 15 nM. Alpha-beta heterodimers associate head-to-tail to form protofilaments running lengthwise along the microtubule wall with the beta-tubulin subunit facing the microtubule plus end conferring a structural polarity. Microtubules usually have 13 protofilaments but different protofilament numbers can be found in some organisms and specialized cells. Mg(2+) is required as a cofactor.

The protein localises to the cytoplasm. Its subcellular location is the cytoskeleton. Functionally, tubulin is the major constituent of microtubules, a cylinder consisting of laterally associated linear protofilaments composed of alpha- and beta-tubulin heterodimers. Microtubules grow by the addition of GTP-tubulin dimers to the microtubule end, where a stabilizing cap forms. Below the cap, tubulin dimers are in GDP-bound state, owing to GTPase activity of alpha-tubulin. This chain is Tubulin beta chain (tubB), found in Phaeosphaeria nodorum (strain SN15 / ATCC MYA-4574 / FGSC 10173) (Glume blotch fungus).